The sequence spans 575 residues: Phosphoenolpyruvate-protein phosphotransferase (575 aa).

Residue His-189 is the Tele-phosphohistidine intermediate of the active site. Residues Arg-296 and Arg-332 each contribute to the phosphoenolpyruvate site. Residues Glu-431 and Asp-455 each coordinate Mg(2+). Residues 454–455 (ND) and Arg-465 each bind phosphoenolpyruvate. Cys-502 serves as the catalytic Proton donor.

This sequence belongs to the PEP-utilizing enzyme family. Homodimer. Requires Mg(2+) as cofactor.

The protein localises to the cytoplasm. The enzyme catalyses L-histidyl-[protein] + phosphoenolpyruvate = N(pros)-phospho-L-histidyl-[protein] + pyruvate. In terms of biological role, general (non sugar-specific) component of the phosphoenolpyruvate-dependent sugar phosphotransferase system (sugar PTS). This major carbohydrate active-transport system catalyzes the phosphorylation of incoming sugar substrates concomitantly with their translocation across the cell membrane. Enzyme I transfers the phosphoryl group from phosphoenolpyruvate (PEP) to the phosphoryl carrier protein (HPr). This Salmonella typhimurium (strain LT2 / SGSC1412 / ATCC 700720) protein is Phosphoenolpyruvate-protein phosphotransferase (ptsI).